A 75-amino-acid chain; its full sequence is Tautomerase PptA (75 aa).

P2 acts as the Proton acceptor; via imino nitrogen in catalysis.

This sequence belongs to the 4-oxalocrotonate tautomerase family. PptA subfamily. Homodimer.

The protein localises to the cytoplasm. This is Tautomerase PptA from Escherichia coli O127:H6 (strain E2348/69 / EPEC).